Reading from the N-terminus, the 473-residue chain is Argininosuccinate lyase (473 aa).

It belongs to the lyase 1 family. Argininosuccinate lyase subfamily.

The protein resides in the cytoplasm. It carries out the reaction 2-(N(omega)-L-arginino)succinate = fumarate + L-arginine. It functions in the pathway amino-acid biosynthesis; L-arginine biosynthesis; L-arginine from L-ornithine and carbamoyl phosphate: step 3/3. This Nocardia farcinica (strain IFM 10152) protein is Argininosuccinate lyase.